Consider the following 771-residue polypeptide: DNA polymerase 1 (771 aa).

The protein belongs to the DNA polymerase type-B family.

It carries out the reaction DNA(n) + a 2'-deoxyribonucleoside 5'-triphosphate = DNA(n+1) + diphosphate. The polypeptide is DNA polymerase 1 (polI) (Pyrococcus abyssi (strain GE5 / Orsay)).